The chain runs to 236 residues: Uridylate kinase (236 aa).

10 to 13 provides a ligand contact to ATP; sequence KLSG. An involved in allosteric activation by GTP region spans residues 18-23; sequence GEDGYG. Residue glycine 52 coordinates UMP. Residues glycine 53 and arginine 57 each contribute to the ATP site. UMP is bound by residues aspartate 72 and 133–140; that span reads TGNPYFTT. ATP contacts are provided by threonine 160, tyrosine 166, and aspartate 169.

This sequence belongs to the UMP kinase family. Homohexamer.

Its subcellular location is the cytoplasm. It catalyses the reaction UMP + ATP = UDP + ADP. It participates in pyrimidine metabolism; CTP biosynthesis via de novo pathway; UDP from UMP (UMPK route): step 1/1. Its activity is regulated as follows. Allosterically activated by GTP. Inhibited by UTP. Catalyzes the reversible phosphorylation of UMP to UDP. This Chlorobium phaeobacteroides (strain DSM 266 / SMG 266 / 2430) protein is Uridylate kinase.